A 367-amino-acid chain; its full sequence is Eukaryotic translation initiation factor 3 subunit H (367 aa).

Residues 14–166 (VQVEALVVMK…LRAFRLSPTF (153 aa)) enclose the MPN domain.

Belongs to the eIF-3 subunit H family. As to quaternary structure, component of the eukaryotic translation initiation factor 3 (eIF-3) complex.

It localises to the cytoplasm. Functionally, component of the eukaryotic translation initiation factor 3 (eIF-3) complex, which is involved in protein synthesis of a specialized repertoire of mRNAs and, together with other initiation factors, stimulates binding of mRNA and methionyl-tRNAi to the 40S ribosome. The eIF-3 complex specifically targets and initiates translation of a subset of mRNAs involved in cell proliferation. This Botryotinia fuckeliana (strain B05.10) (Noble rot fungus) protein is Eukaryotic translation initiation factor 3 subunit H.